The following is a 686-amino-acid chain: Cyclic nucleotide-gated channel alpha-1 (686 aa).

The Cytoplasmic portion of the chain corresponds to 1–165; the sequence is MKNNIINTQQ…PSGNTYYNWL (165 aa). 2 disordered regions span residues 31–75 and 87–149; these read ENGA…PSQR and NVNN…EEKK. Residues 39–53 are compositionally biased toward acidic residues; it reads SEDDDSASTSEESEN. Over residues 110–124 the composition is skewed to basic and acidic residues; that stretch reads SKSDDKNENKNDPEK. Basic residues predominate over residues 125 to 134; it reads KKKKKDKEKK. The span at 135 to 149 shows a compositional bias: basic and acidic residues; that stretch reads KKEEKSKDKKEEEKK. A helical membrane pass occupies residues 166 to 187; that stretch reads FCITLPVMYNWTMVIARACFDE. Residues 188 to 197 lie on the Extracellular side of the membrane; it reads LQSDYLEYWL. A helical membrane pass occupies residues 198–218; the sequence is ILDYVSDIVYLIDMFVRTRTG. Over 219–243 the chain is Cytoplasmic; sequence YLEQGLLVKEELKLINKYKSNLQFK. The chain crosses the membrane as a helical span at residues 244–262; the sequence is LDVLSLIPTDLLYFKLGWN. Topologically, residues 263–267 are extracellular; the sequence is YPEIR. The chain crosses the membrane as a helical span at residues 268 to 286; sequence LNRLLRFSRMFEFFQRTET. The Cytoplasmic portion of the chain corresponds to 287–293; the sequence is RTNYPNI. Residues 291–399 form an ion conduction pathway region; the sequence is PNIFRISNLV…GNIGSMISNM (109 aa). Residues 294 to 317 form a helical membrane-spanning segment; the sequence is FRISNLVMYIVIIIHWNACVFYSI. Residues 318-340 are Extracellular-facing; that stretch reads SKAIGFGNDTWVYPDINDPEFGR. Asn-325 carries an N-linked (GlcNAc...) asparagine glycan. Helical transmembrane passes span 341-375 and 376-400; these read LARKYVYSLYWSTLTLTTIGETPPPVRDSEYVFVV and VDFLIGVLIFATIVGNIGSMISNMN. A selectivity filter region spans residues 358 to 361; sequence TIGE. Positions 401 to 477 are C-linker; it reads AARAEFQARI…DTLKKVRIFA (77 aa). The Cytoplasmic portion of the chain corresponds to 401 to 686; sequence AARAEFQARI…GAESGPIDST (286 aa). The interval 481 to 601 is cyclic nucleotide-binding domain; the sequence is AGLLVELVLK…EEKGKQILMK (121 aa). Positions 541, 544, 557, and 558 each coordinate 3',5'-cyclic GMP. 2 residues coordinate 3',5'-cyclic AMP: Arg-557 and Thr-558. Positions 619–673 form a coiled coil; it reads LEEKVTRMEGSVDLLQTRFARILAEYESMQQKLKQRLTKVEKFLKPLIDTEFSSI.

The protein belongs to the cyclic nucleotide-gated cation channel (TC 1.A.1.5) family. CNGA1 subfamily. As to quaternary structure, forms heterotetrameric channels composed of CNGA1 and CNGB1 subunits with 3:1 stoichiometry. May also form cyclic nucleotide-activated homotetrameric channels, that are efficiently activated by saturating cGMP, but poorly activated by saturating cAMP compared to the heterotetramer with CNGB1. The channel binds Ca(2+)-bound CALM1 via CaM1 and CaM2 regions of the CNGB1 subunit; this interaction modulates the affinity of the channel for cNMPs in response to intracellular Ca(2+) levels. Rod cells in the retina.

The protein resides in the cell membrane. It carries out the reaction Ca(2+)(in) = Ca(2+)(out). It catalyses the reaction Na(+)(in) = Na(+)(out). The catalysed reaction is K(+)(in) = K(+)(out). The enzyme catalyses NH4(+)(in) = NH4(+)(out). It carries out the reaction Rb(+)(in) = Rb(+)(out). It catalyses the reaction Li(+)(in) = Li(+)(out). The catalysed reaction is Cs(+)(in) = Cs(+)(out). Its activity is regulated as follows. Channel opening is activated by cGMP and at a much lesser extent by cAMP. Ca(2+) binding concominantly blocks monovalent cation currents. Inhibited by L-cis-diltiazem. Its function is as follows. Pore-forming subunit of the rod cyclic nucleotide-gated channel. Mediates rod photoresponses at dim light converting transient changes in intracellular cGMP levels into electrical signals. In the dark, cGMP levels are high and keep the channel open enabling a steady inward current carried by Na(+) and Ca(2+) ions that leads to membrane depolarization and neurotransmitter release from synaptic terminals. Upon photon absorption cGMP levels decline leading to channel closure and membrane hyperpolarization that ultimately slows neurotransmitter release and signals the presence of light, the end point of the phototransduction cascade. Conducts cGMP- and cAMP-gated ion currents, with permeability for monovalent and divalent cations. The selectivity for Ca(2+) over Na(+) increases with cGMP concentrations, whereas the selectivity among monovalent ions is independent of the cGMP levels. In Homo sapiens (Human), this protein is Cyclic nucleotide-gated channel alpha-1.